The chain runs to 64 residues: UPF0434 protein TERTU_2813 (64 aa).

Belongs to the UPF0434 family.

In Teredinibacter turnerae (strain ATCC 39867 / T7901), this protein is UPF0434 protein TERTU_2813.